The following is a 379-amino-acid chain: Probable RNA 3'-terminal phosphate cyclase-like protein (379 aa).

It belongs to the RNA 3'-terminal cyclase family. Type 2 subfamily. In terms of assembly, part of the small subunit (SSU) processome, composed of more than 70 proteins and the RNA chaperone small nucleolar RNA (snoRNA) U3.

Its subcellular location is the nucleus. It is found in the nucleolus. In terms of biological role, part of the small subunit (SSU) processome, first precursor of the small eukaryotic ribosomal subunit. During the assembly of the SSU processome in the nucleolus, many ribosome biogenesis factors, an RNA chaperone and ribosomal proteins associate with the nascent pre-rRNA and work in concert to generate RNA folding, modifications, rearrangements and cleavage as well as targeted degradation of pre-ribosomal RNA by the RNA exosome. Does not have cyclase activity. The polypeptide is Probable RNA 3'-terminal phosphate cyclase-like protein (Caenorhabditis elegans).